Here is a 334-residue protein sequence, read N- to C-terminus: Ornithine carbamoyltransferase (334 aa).

Residues 57–60 (STRT), Gln-84, Arg-108, and 135–138 (HPTQ) contribute to the carbamoyl phosphate site. L-ornithine is bound by residues Asn-169, Asp-233, and 237–238 (SM). Carbamoyl phosphate-binding positions include 275-276 (CL) and Arg-320.

Belongs to the aspartate/ornithine carbamoyltransferase superfamily. OTCase family. As to quaternary structure, homotrimer.

It is found in the cytoplasm. The catalysed reaction is carbamoyl phosphate + L-ornithine = L-citrulline + phosphate + H(+). Its pathway is amino-acid biosynthesis; L-arginine biosynthesis; L-arginine from L-ornithine and carbamoyl phosphate: step 1/3. In terms of biological role, reversibly catalyzes the transfer of the carbamoyl group from carbamoyl phosphate (CP) to the N(epsilon) atom of ornithine (ORN) to produce L-citrulline. The sequence is that of Ornithine carbamoyltransferase from Vibrio vulnificus (strain CMCP6).